Consider the following 238-residue polypeptide: MLVLFVATWSDLGLCKKRPKPGGWNTGGSRYPGQGSPGGNRYPPQGGGGWGQPHGGGWGQPHGGGWGQPHGGGWGQGGGTHNQWHKPSKPKTSMKHMAGAAAAGAVVGGLGGYMLGSAMSRPLIHFGNDYEDRYYRENMYRYPNQVYYRPVDQYSNQNNFVHDCVNITIKQHTVTTTTKGENFTETDVKMMERVVEQMCITQYQKESQAYYQRGSSIVLFSSPPVILLISFLIFLIVG.

The first 15 residues, 1–15, serve as a signal peptide directing secretion; it reads MLVLFVATWSDLGLC. The interval 16-215 is interaction with GRB2, ERI3 and SYN1; the sequence is KKRPKPGGWN…ESQAYYQRGS (200 aa). Positions 18–93 are disordered; that stretch reads RPKPGGWNTG…WHKPSKPKTS (76 aa). 4 consecutive repeat copies span residues 44–52, 53–60, 61–68, and 69–76. The segment at 44–83 is 4 X 8 AA tandem repeats of P-H-G-G-G-W-G-Q; it reads PQGGGGWGQPHGGGWGQPHGGGWGQPHGGGWGQGGGTHNQ. A compositionally biased stretch (gly residues) spans 45 to 80; sequence QGGGGWGQPHGGGWGQPHGGGWGQPHGGGWGQGGGT. Cu(2+)-binding residues include Gly47, Gly48, His54, Gly55, Gly56, His62, Gly63, Gly64, His70, Gly71, and Gly72. The segment covering 83–93 has biased composition (basic residues); it reads QWHKPSKPKTS. A disulfide bridge links Cys164 with Cys199. 2 N-linked (GlcNAc...) asparagine glycosylation sites follow: Asn166 and Asn182. Ser215 is lipidated: GPI-anchor amidated serine. A propeptide spans 216-238 (removed in mature form); it reads SIVLFSSPPVILLISFLIFLIVG.

Belongs to the prion family. As to quaternary structure, monomer and homodimer. Has a tendency to aggregate into amyloid fibrils containing a cross-beta spine, formed by a steric zipper of superposed beta-strands. Soluble oligomers may represent an intermediate stage on the path to fibril formation. Copper binding may promote oligomerization. Interacts with GRB2, APP, ERI3/PRNPIP and SYN1. Mislocalized cytosolically exposed PrP interacts with MGRN1; this interaction alters MGRN1 subcellular location and causes lysosomal enlargement. Interacts with KIAA1191.

It localises to the cell membrane. Its subcellular location is the golgi apparatus. Functionally, its primary physiological function is unclear. Has cytoprotective activity against internal or environmental stresses. May play a role in neuronal development and synaptic plasticity. May be required for neuronal myelin sheath maintenance. May play a role in iron uptake and iron homeostasis. Soluble oligomers are toxic to cultured neuroblastoma cells and induce apoptosis (in vitro). Association with GPC1 (via its heparan sulfate chains) targets PRNP to lipid rafts. Also provides Cu(2+) or Zn(2+) for the ascorbate-mediated GPC1 deaminase degradation of its heparan sulfate side chains. This chain is Major prion protein (PRNP), found in Theropithecus gelada (Gelada baboon).